A 348-amino-acid chain; its full sequence is WRKY transcription factor WRKY71 (348 aa).

Residues 50–84 (VAALEAELKRMGAENRQLSEMLAAVAAKYEALQSQ) are a coiled coil. Disordered regions lie at residues 91-141 (ASAN…APHH) and 246-287 (GEHN…APVV). A compositionally biased stretch (low complexity) spans 102–114 (NQSSTSEGGSVSP). The Nuclear localization signal motif lies at 116 to 122 (RKRKSES). Over residues 126–136 (SPPPPPPPHPH) the composition is skewed to pro residues. Positions 187-253 (DLSLVVKDGY…YEGEHNHGQP (67 aa)) form a DNA-binding region, WRKY. The transcription repression of gibberellic acid (GA)-induced promoters stretch occupies residues 267-348 (SGKSAGKPPH…RILELSPTKD (82 aa)). Residues 275–286 (PHAPAAAPPAPV) are compositionally biased toward pro residues.

This sequence belongs to the WRKY group II-a family. Interacts with WRKY51; this interaction promotes W box binding of the complex WRKY51/WRKY71 in a zinc ion-dependent manner. As to expression, highly expressed in aleurone cells. In seeds, predominantly present in the plumule, radicle and scutellum of the embryo. Expressed in roots, stems, young leaves and spikelets.

It localises to the nucleus. Functionally, transcription repressor. Interacts specifically with the W box (5'-(T)TGAC[CT]-3'), a frequently occurring elicitor-responsive cis-acting element. Represses specifically gibberellic acid (GA)-induced promoters in aleurone cells, probably by interfering with GAM1. Regulates, probably indirectly, the activation of defense-related genes such as GF14E during defense response. Modulates plant innate immunity against X.oryzae pv. oryzae (Xoo). Confers resistance to the virulent bacterial pathogen X.oryzae pv. oryzae (Xoo) 13751, probably via the regulation of NPR1 and PR1b defense signaling pathways. The sequence is that of WRKY transcription factor WRKY71 from Oryza sativa subsp. indica (Rice).